We begin with the raw amino-acid sequence, 195 residues long: Pyridoxal 5'-phosphate synthase subunit PdxT (195 aa).

49-51 (GES) contacts L-glutamine. Cysteine 81 acts as the Nucleophile in catalysis. Residues arginine 113 and 141–142 (IR) each bind L-glutamine. Residues histidine 177 and glutamate 179 each act as charge relay system in the active site.

The protein belongs to the glutaminase PdxT/SNO family. As to quaternary structure, in the presence of PdxS, forms a dodecamer of heterodimers. Only shows activity in the heterodimer.

The enzyme catalyses aldehydo-D-ribose 5-phosphate + D-glyceraldehyde 3-phosphate + L-glutamine = pyridoxal 5'-phosphate + L-glutamate + phosphate + 3 H2O + H(+). It catalyses the reaction L-glutamine + H2O = L-glutamate + NH4(+). Its pathway is cofactor biosynthesis; pyridoxal 5'-phosphate biosynthesis. Catalyzes the hydrolysis of glutamine to glutamate and ammonia as part of the biosynthesis of pyridoxal 5'-phosphate. The resulting ammonia molecule is channeled to the active site of PdxS. The polypeptide is Pyridoxal 5'-phosphate synthase subunit PdxT (Mycolicibacterium vanbaalenii (strain DSM 7251 / JCM 13017 / BCRC 16820 / KCTC 9966 / NRRL B-24157 / PYR-1) (Mycobacterium vanbaalenii)).